We begin with the raw amino-acid sequence, 110 residues long: Secreted Ly-6/uPAR-related protein 1 (110 aa).

A signal peptide spans 1–22 (MTLRWAMWLLLLAAWSMGYGEA). A UPAR/Ly6 domain is found at 24–73 (RCYTCEQPTAINSCKNIAQCKMEDTACKTVLETVEAAFPFNHSPMVTRSC). Cystine bridges form between cysteine 25/cysteine 50, cysteine 28/cysteine 37, cysteine 43/cysteine 73, cysteine 77/cysteine 93, and cysteine 94/cysteine 99.

In terms of assembly, homodimer. Interacts with PLAU. Interacts with CHRNA7. In terms of tissue distribution, expressed in skin, eye, whole lung, trachea, esophagus and stomach. Widely expressed in various tissues including spleen and thymus but not pancreas. Expressed in macrophages, dendritic cells, T and B cells. Expressed in lung specifically in ciliated bronchial epithelial cells (at protein level). Expression is decreased in lungs of asthmatic model mice. Expressed in the cornea.

The protein resides in the secreted. Functionally, has an antitumor activity. Was found to be a marker of late differentiation of the skin. Implicated in maintaining the physiological and structural integrity of the keratinocyte layers of the skin. In vitro down-regulates keratinocyte proliferation; the function may involve the proposed role as modulator of nicotinic acetylcholine receptors (nAChRs) activity. In vitro inhibits alpha-7-dependent nAChR currents in an allosteric manner. In T cells may be involved in regulation of intracellular Ca(2+) signaling. Seems to have a immunomodulatory function in the cornea. The function may implicate a possible role as a scavenger receptor for PLAU thereby blocking PLAU-dependent functions of PLAUR such as in cell migration and proliferation. This Mus musculus (Mouse) protein is Secreted Ly-6/uPAR-related protein 1 (Slurp1).